Here is a 92-residue protein sequence, read N- to C-terminus: Large ribosomal subunit protein bL25 (92 aa).

The protein belongs to the bacterial ribosomal protein bL25 family. As to quaternary structure, part of the 50S ribosomal subunit; part of the 5S rRNA/L5/L18/L25 subcomplex. Contacts the 5S rRNA. Binds to the 5S rRNA independently of L5 and L18.

This is one of the proteins that binds to the 5S RNA in the ribosome where it forms part of the central protuberance. In Aliivibrio fischeri (strain MJ11) (Vibrio fischeri), this protein is Large ribosomal subunit protein bL25.